Consider the following 340-residue polypeptide: Ferrochelatase (340 aa).

Fe cation-binding residues include His189 and Glu292.

Belongs to the ferrochelatase family.

It localises to the cytoplasm. It carries out the reaction heme b + 2 H(+) = protoporphyrin IX + Fe(2+). It participates in porphyrin-containing compound metabolism; protoheme biosynthesis; protoheme from protoporphyrin-IX: step 1/1. Catalyzes the ferrous insertion into protoporphyrin IX. In Pseudomonas savastanoi pv. phaseolicola (strain 1448A / Race 6) (Pseudomonas syringae pv. phaseolicola (strain 1448A / Race 6)), this protein is Ferrochelatase.